Reading from the N-terminus, the 372-residue chain is Saccharopine dehydrogenase [NAD(+), L-lysine-forming] (372 aa).

Positions 18 and 77 each coordinate L-saccharopine. Residue Lys-77 is the Proton acceptor of the active site. The Proton donor role is filled by His-95. L-saccharopine is bound at residue Gln-100. Arg-129 is an NAD(+) binding site. L-saccharopine is bound by residues Arg-130 and Phe-134. Residues 200 to 201, Asp-224, Thr-228, Tyr-248, and Val-275 each bind NAD(+); that span reads GR. Cys-202 and Cys-246 are joined by a disulfide. L-saccharopine is bound at residue 276 to 278; sequence SAD. Residue 316-319 coordinates NAD(+); that stretch reads IDHL.

Belongs to the AlaDH/PNT family. In terms of assembly, monomer.

The enzyme catalyses L-saccharopine + NAD(+) + H2O = L-lysine + 2-oxoglutarate + NADH + H(+). The protein operates within amino-acid biosynthesis; L-lysine biosynthesis via AAA pathway; L-lysine from L-alpha-aminoadipate (fungal route): step 3/3. In terms of biological role, catalyzes the NAD(+)-dependent cleavage of saccharopine to L-lysine and 2-oxoglutarate, the final step in the alpha-aminoadipate (AAA) pathway for lysin biosynthesis. The protein is Saccharopine dehydrogenase [NAD(+), L-lysine-forming] (lys-4) of Neurospora crassa (strain ATCC 24698 / 74-OR23-1A / CBS 708.71 / DSM 1257 / FGSC 987).